We begin with the raw amino-acid sequence, 120 residues long: UPF0102 protein PTH_1707 (120 aa).

The protein belongs to the UPF0102 family.

In Pelotomaculum thermopropionicum (strain DSM 13744 / JCM 10971 / SI), this protein is UPF0102 protein PTH_1707.